The chain runs to 560 residues: Muellerian-inhibiting factor (560 aa).

The signal sequence occupies residues 1–24 (MRDLPLTSLALVLSALGALLGTEA). A propeptide spanning residues 25-451 (LRAEEPAVGT…DPRGPGRAQR (427 aa)) is cleaved from the precursor. N-linked (GlcNAc...) asparagine glycosylation occurs at N64. The tract at residues 259-287 (PLPAHGQLDTVPFPPPRPSAELEESPPSA) is disordered. N329 carries an N-linked (GlcNAc...) asparagine glycan. 3 disulfides stabilise this stretch: C462–C526, C488–C557, and C492–C559.

The protein belongs to the TGF-beta family. As to quaternary structure, homodimer; disulfide-linked. Post-translationally, preproprotein is proteolytically processed to generate N- and C-terminal cleavage products that homodimerize and associate to form a biologically active non-covalent complex. Binding of the non-covalent complex to AMHR2 induces dissociation of the pro-region from the mature C-terminal dimer. The N-terminal portion of the protein, despite having no intrinsic activity, has the role of amplifying the activity of the C-terminus. In ovaries, AMH is detected in granulosa cells of early growing follicles.

It localises to the secreted. Plays an important role in several reproductive functions. Induces Muellerian duct regression during male fetal sexual differentiation. Also plays a role in Leydig cell differentiation and function. In female acts as a negative regulator of the primordial to primary follicle transition and decreases FSH sensitivity of growing follicles. AMH signals by binding to a specific type-II receptor, AMHR2, that heterodimerizes with type-I receptors (ACVR1 and BMPR1A), and recruiting SMAD proteins that are translocated to the nucleus to regulate target gene expression. This chain is Muellerian-inhibiting factor, found in Homo sapiens (Human).